Here is a 97-residue protein sequence, read N- to C-terminus: Small ribosomal subunit protein bS20 (97 aa).

This sequence belongs to the bacterial ribosomal protein bS20 family.

Binds directly to 16S ribosomal RNA. The sequence is that of Small ribosomal subunit protein bS20 from Synechocystis sp. (strain ATCC 27184 / PCC 6803 / Kazusa).